A 264-amino-acid chain; its full sequence is Small ribosomal subunit protein eS4 (264 aa).

The 63-residue stretch at 42–104 (LPLVIIMRNR…TNENFRLLYD (63 aa)) folds into the S4 RNA-binding domain.

This sequence belongs to the eukaryotic ribosomal protein eS4 family.

It is found in the cytoplasm. The protein is Small ribosomal subunit protein eS4 (RPS4) of Solanum tuberosum (Potato).